Reading from the N-terminus, the 366-residue chain is Patr class I histocompatibility antigen, C alpha chain (366 aa).

An N-terminal signal peptide occupies residues 1–24; sequence MRVTAPRTLLLLLSGGLALTETWA. The alpha-1 stretch occupies residues 25-114; the sequence is GSHSLRYFDT…LRGYYNQSED (90 aa). Residues 25-308 are Extracellular-facing; the sequence is GSHSLRYFDT…KPTSQPTIPI (284 aa). The N-linked (GlcNAc...) asparagine glycan is linked to Asn-110. The alpha-2 stretch occupies residues 115–206; it reads GSHTLQWMYG…ENGKETLQRT (92 aa). Intrachain disulfides connect Cys-125–Cys-192 and Cys-227–Cys-283. The segment at 207–298 is alpha-3; the sequence is ECPKTHMTHH…GLPEPLTLRW (92 aa). The Ig-like C1-type domain maps to 209-297; the sequence is PKTHMTHHPV…EGLPEPLTLR (89 aa). A connecting peptide region spans residues 299–308; sequence KPTSQPTIPI. Residues 309-332 traverse the membrane as a helical segment; sequence VGIVAGLAVLAVLAVLGAVVTAMM. The Cytoplasmic segment spans residues 333–366; that stretch reads CRRKSSGGKGGSCSQAACSNSAQGSDESLIACKA. A phosphoserine mark is found at Ser-357 and Ser-360.

Belongs to the MHC class I family. Heterodimer of an alpha chain and a beta chain (beta-2-microglobulin).

It localises to the membrane. In terms of biological role, involved in the presentation of foreign antigens to the immune system. The polypeptide is Patr class I histocompatibility antigen, C alpha chain (Pan troglodytes (Chimpanzee)).